The chain runs to 734 residues: MSNRTYADNLFPQQVAEQHEEQMSSGSSPKSNSPSRSISSVEAANSRIHIGWMATTLDVAENLDRHVATFCTRLGEFKYNFVVYPIGGVVRAFWTPNGSAENHPPVIDLPDVQLRNDLWESYVVGKISPWIDCDSSDPAFASLSEEHLLKELSYICYLGLQTMAIELTRISSPRTAAILKKWIWTRNSRFTVWVQLPSAIEKCKDYDAFTIEHVDLWTIWADFRKNCGNFSGVYFQVALTISSELPDELTELKLVDRWKAEPLAAFVIESGLFISGRNGEASIPSAHINLLKHLWTTDALRIVLRATTDTFKYNTSIKSEYSQALRHAVRNVNYRSRPDVGEGSNDSTHYLNVIEYKDVLQAPLQPLSENLDSGVYNTFEQDQIKYDVYGEAVVGALKDLGADGRKTVVIYLLGGGRGPIGTKILKSEREYNNTFRQGQESLKVKLYIVEKNPNAIVTLKYMNVRTWKRRVTIIESDMRSLPGIAKDRGFEQPDIIVSELLGSFGDNELSPECLDGVTGFLKPTTISIPQKYTSYVKPIMSTHIHQTIKAQSIPYLSRAIPSHGRGEPELDEDEMWIQKYPQGHVRNNMDQIYVVYLSKYIPLAETTKPVFTFEHPNFMNSSNERSDSIEFVMDRNADLMGFAGYFDLQLYKTVMLSIEPSTHTPGMVSWFPAVIPLRDQLRVGEGDRISLKIDRKVDNTGVWYEWHVEKKKTNGESVSTPIQNPNGESYYMRM.

Polar residues predominate over residues 1 to 16 (MSNRTYADNLFPQQVA). A disordered region spans residues 1 to 39 (MSNRTYADNLFPQQVAEQHEEQMSSGSSPKSNSPSRSIS). Residues 24–39 (SSGSSPKSNSPSRSIS) show a composition bias toward low complexity. Residues 42–329 (EAANSRIHIG…EYSQALRHAV (288 aa)) form a TIM barrel region. The region spanning 360–706 (LQAPLQPLSE…VDNTGVWYEW (347 aa)) is the SAM-dependent MTase PRMT-type domain. Y376 is a binding site for S-adenosyl-L-methionine. Residue F379 participates in a protein binding. Residues 385–386 (KY), E450, and 477–478 (DM) each bind S-adenosyl-L-methionine. Residues E499 and E508 each coordinate a protein. Catalysis depends on proton donor/acceptor residues E499 and E508. A beta barrel region spans residues 529–734 (PQKYTSYVKP…PNGESYYMRM (206 aa)). The tract at residues 541–589 (STHIHQTIKAQSIPYLSRAIPSHGRGEPELDEDEMWIQKYPQGHVRNNM) is dimerization.

This sequence belongs to the class I-like SAM-binding methyltransferase superfamily. Protein arginine N-methyltransferase family. Homodimer. Interacts with cep-1 (via C-terminus domain); does not methylate cep-1. Interacts with cbp-1 (via N-terminus domain and HAT domain); the interaction results in methylation of cbp-1. Component of a complex that contains cep-1 and cbp-1. May interact with pid-2, pid-4 and pid-5.

The protein localises to the nucleus. The enzyme catalyses L-arginyl-[protein] + 2 S-adenosyl-L-methionine = N(omega),N(omega)'-dimethyl-L-arginyl-[protein] + 2 S-adenosyl-L-homocysteine + 2 H(+). Functionally, catalyzes the symmetrical dimethylation of arginine residues in targets such as small nuclear ribonucleoproteins, histone H2A/H4 and cbp-1. Dimethylation occurs in a distributive manner where the protein is released after the addition of the first methyl group prior to rebinding for the addition of the second methyl group. Plays a role in the negative regulation of DNA damage-induced apoptosis. By methylating cbp-1, may prevent apoptosis by repressing the capacity of cbp-1 to enhance cep-1 dependent transcription activation of the programmed cell death activator egl-1. Plays a role in heat and oxidative stress resistance. This chain is Protein arginine N-methyltransferase 5, found in Caenorhabditis elegans.